Reading from the N-terminus, the 128-residue chain is Aspartate 1-decarboxylase (128 aa).

Ser-25 acts as the Schiff-base intermediate with substrate; via pyruvic acid in catalysis. Pyruvic acid (Ser) is present on Ser-25. Thr-57 is a binding site for substrate. Catalysis depends on Tyr-58, which acts as the Proton donor. 73-75 (GSA) contributes to the substrate binding site.

It belongs to the PanD family. In terms of assembly, heterooctamer of four alpha and four beta subunits. The cofactor is pyruvate. In terms of processing, is synthesized initially as an inactive proenzyme, which is activated by self-cleavage at a specific serine bond to produce a beta-subunit with a hydroxyl group at its C-terminus and an alpha-subunit with a pyruvoyl group at its N-terminus.

It is found in the cytoplasm. It carries out the reaction L-aspartate + H(+) = beta-alanine + CO2. It participates in cofactor biosynthesis; (R)-pantothenate biosynthesis; beta-alanine from L-aspartate: step 1/1. In terms of biological role, catalyzes the pyruvoyl-dependent decarboxylation of aspartate to produce beta-alanine. In Burkholderia cenocepacia (strain ATCC BAA-245 / DSM 16553 / LMG 16656 / NCTC 13227 / J2315 / CF5610) (Burkholderia cepacia (strain J2315)), this protein is Aspartate 1-decarboxylase.